The chain runs to 349 residues: Succinylglutamate desuccinylase (349 aa).

Positions 70, 73, and 166 each coordinate Zn(2+). Residue E229 is part of the active site.

Belongs to the AspA/AstE family. Succinylglutamate desuccinylase subfamily. Zn(2+) is required as a cofactor.

It catalyses the reaction N-succinyl-L-glutamate + H2O = L-glutamate + succinate. It functions in the pathway amino-acid degradation; L-arginine degradation via AST pathway; L-glutamate and succinate from L-arginine: step 5/5. In terms of biological role, transforms N(2)-succinylglutamate into succinate and glutamate. This Burkholderia thailandensis (strain ATCC 700388 / DSM 13276 / CCUG 48851 / CIP 106301 / E264) protein is Succinylglutamate desuccinylase.